The following is a 143-amino-acid chain: Transcriptional regulator MraZ (143 aa).

2 consecutive SpoVT-AbrB domains span residues T5 to E47 and T76 to A119.

Belongs to the MraZ family. Forms oligomers.

The protein localises to the cytoplasm. It is found in the nucleoid. The sequence is that of Transcriptional regulator MraZ from Nocardia farcinica (strain IFM 10152).